Reading from the N-terminus, the 313-residue chain is WD repeat-containing protein 82-A (313 aa).

6 WD repeats span residues 19 to 58 (ENSDKINCFDFSPTGETVISSSDDDSIVLYDCQEGKPKRT), 105 to 144 (GHSKRVVALSMSPVDDTFISASLDKTIRLWDLRSPNCQGL), 146 to 184 (HLQGKPVCSFDPEGLIFAAGVNSEMVKLYDLRSFDKGPF), 192 to 231 (DRTCEWTSLKFSQDGKLILMSTNGGFLRLVDAFKGAVMHT), 236 to 276 (NNSK…KVAV), and 280 to 313 (KHTGPITCLQFNPKFMTFASACSNMAFWLPTIDD).

Belongs to the WD repeat SWD2 family. Component of the SET1/COMPASS complex. Component of the PNUTS-PP1 phosphatase complex.

The protein resides in the nucleus. The protein localises to the chromosome. It is found in the cytoplasm. In terms of biological role, regulatory component of the SET1/COMPASS complex implicated in the tethering of this complex to transcriptional start sites of active genes. Facilitates histone H3 'Lys-4' methylation (H3K4me) via recruitment of the SETD1A or SETD1B to the 'Ser-5' phosphorylated C-terminal domain (CTD) of RNA polymerase II large subunit (POLR2A). Component of the PNUTS-PP1 protein phosphatase complex, a protein phosphatase 1 (PP1) complex that promotes RNA polymerase II transcription pause-release, allowing transcription elongation. The chain is WD repeat-containing protein 82-A (wdr82-a) from Xenopus laevis (African clawed frog).